The primary structure comprises 397 residues: Probable pyruvate dehydrogenase E1 component subunit alpha, mitochondrial (397 aa).

Residues His-86, Tyr-112, Arg-113, Gly-159, Val-161, Asp-190, Gly-191, Ala-192, and Asn-219 each contribute to the pyruvate site. Thiamine diphosphate-binding residues include Tyr-112, Arg-113, Gly-159, Val-161, Asp-190, Gly-191, Ala-192, Asn-219, and His-286. Residue Asp-190 participates in Mg(2+) binding. Residue Asn-219 participates in Mg(2+) binding.

Tetramer of 2 alpha and 2 beta subunits. It depends on thiamine diphosphate as a cofactor. The cofactor is Mg(2+).

Its subcellular location is the mitochondrion matrix. The catalysed reaction is N(6)-[(R)-lipoyl]-L-lysyl-[protein] + pyruvate + H(+) = N(6)-[(R)-S(8)-acetyldihydrolipoyl]-L-lysyl-[protein] + CO2. Its activity is regulated as follows. E1 activity is regulated by phosphorylation (inactivation) and dephosphorylation (activation) of the alpha subunit. The pyruvate dehydrogenase complex catalyzes the overall conversion of pyruvate to acetyl-CoA and CO(2). It contains multiple copies of three enzymatic components: pyruvate dehydrogenase (E1), dihydrolipoamide acetyltransferase (E2) and lipoamide dehydrogenase (E3). This is Probable pyruvate dehydrogenase E1 component subunit alpha, mitochondrial from Caenorhabditis elegans.